The primary structure comprises 325 residues: NADH-quinone oxidoreductase subunit H (325 aa).

Transmembrane regions (helical) follow at residues 11-31 (ILISVLKAVVILLVVVTCGAF), 81-101 (AIFTLAPVIAFTSLLLSFAIV), 114-134 (IGILFFLMMAGLAVYAVLFAG), 154-174 (LSYEVFLGLSLMGVVAQVGSF), 186-206 (VWNVIPQFFGFLTFAIAGVAV), 237-257 (FFVGEYIGIVTVSALIVTLFF), 265-285 (LPPFIWFALKTAFFMVMFILI), and 304-324 (VCLPLTLLNLLATAAVILYNA).

It belongs to the complex I subunit 1 family. As to quaternary structure, NDH-1 is composed of 13 different subunits. Subunits NuoA, H, J, K, L, M, N constitute the membrane sector of the complex.

It localises to the cell inner membrane. It catalyses the reaction a quinone + NADH + 5 H(+)(in) = a quinol + NAD(+) + 4 H(+)(out). Its function is as follows. NDH-1 shuttles electrons from NADH, via FMN and iron-sulfur (Fe-S) centers, to quinones in the respiratory chain. The immediate electron acceptor for the enzyme in this species is believed to be ubiquinone. Couples the redox reaction to proton translocation (for every two electrons transferred, four hydrogen ions are translocated across the cytoplasmic membrane), and thus conserves the redox energy in a proton gradient. This subunit may bind ubiquinone. This chain is NADH-quinone oxidoreductase subunit H, found in Yersinia pseudotuberculosis serotype O:3 (strain YPIII).